A 314-amino-acid polypeptide reads, in one-letter code: 2,3-dihydroxyphenylpropionate/2,3-dihydroxicinnamic acid 1,2-dioxygenase (314 aa).

The active-site Proton donor is H115. The active-site Proton acceptor is H179.

The protein belongs to the LigB/MhpB extradiol dioxygenase family. As to quaternary structure, homotetramer. It depends on Fe(2+) as a cofactor.

The catalysed reaction is 3-(2,3-dihydroxyphenyl)propanoate + O2 = (2Z,4E)-2-hydroxy-6-oxonona-2,4-dienedioate + H(+). It catalyses the reaction (2E)-3-(2,3-dihydroxyphenyl)prop-2-enoate + O2 = (2Z,4E,7E)-2-hydroxy-6-oxonona-2,4,7-trienedioate + H(+). It participates in aromatic compound metabolism; 3-phenylpropanoate degradation. Catalyzes the non-heme iron(II)-dependent oxidative cleavage of 2,3-dihydroxyphenylpropionic acid and 2,3-dihydroxicinnamic acid into 2-hydroxy-6-ketononadienedioate and 2-hydroxy-6-ketononatrienedioate, respectively. This chain is 2,3-dihydroxyphenylpropionate/2,3-dihydroxicinnamic acid 1,2-dioxygenase, found in Klebsiella pneumoniae (strain 342).